Consider the following 139-residue polypeptide: TDP-4-oxo-6-deoxy-alpha-D-glucose-3,4-oxoisomerase (139 aa).

The active-site Proton acceptor is the His-49.

As to quaternary structure, homodimer.

The enzyme catalyses dTDP-4-dehydro-6-deoxy-alpha-D-glucose = dTDP-3-dehydro-6-deoxy-alpha-D-galactose. Functionally, mediates the isomerization of dTDP-6-deoxy-D-xylohex-4-ulose into dTDP-6-deoxy-D-xylohex-3-ulose in the biosynthesis of dTDP-3-acetamido-3,6-dideoxy-alpha-D-galactose, a glycan chain of the S-layer. In Aneurinibacillus thermoaerophilus, this protein is TDP-4-oxo-6-deoxy-alpha-D-glucose-3,4-oxoisomerase (fdtA).